The primary structure comprises 551 residues: Chaperonin GroEL (551 aa).

Residues 29 to 32, Lys50, 86 to 90, Gly417, and Asp499 each bind ATP; these read TAGP and DGTTT.

The protein belongs to the chaperonin (HSP60) family. In terms of assembly, forms a cylinder of 14 subunits composed of two heptameric rings stacked back-to-back. Interacts with the co-chaperonin GroES.

Its subcellular location is the cytoplasm. The catalysed reaction is ATP + H2O + a folded polypeptide = ADP + phosphate + an unfolded polypeptide.. Its function is as follows. Together with its co-chaperonin GroES, plays an essential role in assisting protein folding. The GroEL-GroES system forms a nano-cage that allows encapsulation of the non-native substrate proteins and provides a physical environment optimized to promote and accelerate protein folding. The sequence is that of Chaperonin GroEL from Ehrlichia ruminantium (strain Gardel).